Consider the following 169-residue polypeptide: S-ribosylhomocysteine lyase (169 aa).

Residues His-54, His-58, and Cys-128 each coordinate Fe cation.

This sequence belongs to the LuxS family. In terms of assembly, homodimer. The cofactor is Fe cation.

The catalysed reaction is S-(5-deoxy-D-ribos-5-yl)-L-homocysteine = (S)-4,5-dihydroxypentane-2,3-dione + L-homocysteine. Involved in the synthesis of autoinducer 2 (AI-2) which is secreted by bacteria and is used to communicate both the cell density and the metabolic potential of the environment. The regulation of gene expression in response to changes in cell density is called quorum sensing. Catalyzes the transformation of S-ribosylhomocysteine (RHC) to homocysteine (HC) and 4,5-dihydroxy-2,3-pentadione (DPD). The protein is S-ribosylhomocysteine lyase of Shewanella oneidensis (strain ATCC 700550 / JCM 31522 / CIP 106686 / LMG 19005 / NCIMB 14063 / MR-1).